A 406-amino-acid chain; its full sequence is Exodeoxyribonuclease 7 large subunit (406 aa).

The protein belongs to the XseA family. As to quaternary structure, heterooligomer composed of large and small subunits.

It is found in the cytoplasm. It catalyses the reaction Exonucleolytic cleavage in either 5'- to 3'- or 3'- to 5'-direction to yield nucleoside 5'-phosphates.. Functionally, bidirectionally degrades single-stranded DNA into large acid-insoluble oligonucleotides, which are then degraded further into small acid-soluble oligonucleotides. The sequence is that of Exodeoxyribonuclease 7 large subunit from Desulfitobacterium hafniense (strain Y51).